A 791-amino-acid polypeptide reads, in one-letter code: Solute carrier family 26 member 9 (791 aa).

Topologically, residues 1–70 (MSQPRPRYVV…WLPKYKIKDY (70 aa)) are cytoplasmic. Residues 71-96 (IIPDLLGGLSGGSIQVPQGMAFALLA) traverse the membrane as a helical segment. Topologically, residues 97 to 99 (NLP) are extracellular. A helical membrane pass occupies residues 100-117 (AVNGLYSSFFPLLTYFFL). The Cytoplasmic segment spans residues 118–128 (GGVHQMVPGTF). A helical membrane pass occupies residues 129 to 142 (AVISILVGNICLQL). Residues 143 to 171 (APESKFQVFNNATNESYVDTAAMEAERLH) lie on the Extracellular side of the membrane. A helical transmembrane segment spans residues 172-190 (VSATLACLTAIIQMGLGFM). Residues 191–202 (QFGFVAIYLSES) are Cytoplasmic-facing. The helical transmembrane segment at 203–224 (FIRGFMTAAGLQILISVLKYIF) threads the bilayer. Topologically, residues 225-235 (GLTIPSYTGPG) are extracellular. The helical intramembrane region spans 236–244 (SIVFTFIDI). Topologically, residues 245–254 (CKNLPHTNIA) are extracellular. A helical transmembrane segment spans residues 255-273 (SLIFALISGAFLVLVKELN). Over 274 to 281 (ARYMHKIR) the chain is Cytoplasmic. A helical membrane pass occupies residues 282 to 297 (FPIPTEMIVVVVATAI). The Extracellular segment spans residues 298–327 (SGGCKMPKKYHMQIVGEIQRGFPTPVSPVV). A helical transmembrane segment spans residues 328-348 (SQWKDMIGTAFSLAIVSYVIN). At 349–366 (LAMGRTLANKHGYDVDSN) the chain is on the cytoplasmic side. A helical transmembrane segment spans residues 367 to 382 (QEMIALGCSNFFGSFF). Over 383–390 (KIHVICCA) the chain is Extracellular. The chain crosses the membrane as a helical span at residues 391–400 (LSVTLAVDGA). The Cytoplasmic portion of the chain corresponds to 401–404 (GGKS). The helical transmembrane segment at 405–423 (QVASLCVSLVVMITMLVLG) threads the bilayer. Residues 424 to 428 (IYLYP) are Extracellular-facing. The chain crosses the membrane as a helical span at residues 429–450 (LPKSVLGALIAVNLKNSLKQLT). Residues 451 to 464 (DPYYLWRKSKLDCC) lie on the Cytoplasmic side of the membrane. Residues 465–476 (IWVVSFLSSFFL) form a helical membrane-spanning segment. A topological domain (extracellular) is located at residue Ser477. Residues 478 to 489 (LPYGVAVGVAFS) traverse the membrane as a helical segment. Topologically, residues 490-791 (VLVVVFQTQF…MFHAETLTAL (302 aa)) are cytoplasmic. Residues 519 to 737 (TYNRAQDIQG…PSIHDAVLFA (219 aa)) enclose the STAS domain. Positions 602–650 (FENAPPTDPNNNQTPANGTSVSYITFSPDSSSPAQSEPPASAEAPGEPS) are disordered. Over residues 610–626 (PNNNQTPANGTSVSYIT) the composition is skewed to polar residues. Low complexity predominate over residues 628-650 (SPDSSSPAQSEPPASAEAPGEPS).

It belongs to the SLC26A/SulP transporter (TC 2.A.53) family. In terms of assembly, homodimer. As to expression, predominantly expressed in lung at the luminal side of the bronchiolar and alveolar epithelium of lung. To a lower extent, also expressed in pancreas and prostate.

Its subcellular location is the cell membrane. The protein resides in the endomembrane system. The enzyme catalyses chloride(in) = chloride(out). The catalysed reaction is hydrogencarbonate(in) + chloride(out) = hydrogencarbonate(out) + chloride(in). Inhibited by ammonium and thiosulfate. Functionally, ion transporter that can act both as an ion channel and anion exchanger. Mainly acts as a chloride channel, which mediate uncoupled chloride anion transport in an alternate-access mechanism where a saturable binding site is alternately exposed to either one or the other side of the membrane. Also acts as a DIDS- and thiosulfate- sensitive anion exchanger the exchange of chloride for bicarbonate ions across the cell membrane. This chain is Solute carrier family 26 member 9, found in Homo sapiens (Human).